The primary structure comprises 139 residues: MGRTIRFGVSLDSDLLEKFDALCDDRCYQTRSEAIRDLIRNTLVQQEWEDTDREIAGTLTIVYDHHKSDLAQRLTEIQHDHHGIIITSLHVHLDHHNCLEVLVLKGPGADVRTLSQRLISTKGVKHGKLSLTTTGQDLT.

The Ni(2+) site is built by His-79, His-90, His-92, and Cys-98.

The protein belongs to the transcriptional regulatory CopG/NikR family. Requires Ni(2+) as cofactor.

Its function is as follows. Transcriptional regulator. This is Putative nickel-responsive regulator from Nitratidesulfovibrio vulgaris (strain DSM 19637 / Miyazaki F) (Desulfovibrio vulgaris).